Here is a 48-residue protein sequence, read N- to C-terminus: Large ribosomal subunit protein bL34 (48 aa).

This sequence belongs to the bacterial ribosomal protein bL34 family.

In Mycoplasma genitalium (strain ATCC 33530 / DSM 19775 / NCTC 10195 / G37) (Mycoplasmoides genitalium), this protein is Large ribosomal subunit protein bL34 (rpmH).